Reading from the N-terminus, the 157-residue chain is Cell cycle regulator of non-homologous end joining (157 aa).

Position 1 is an N-acetylmethionine (methionine 1). The KBM motif lies at 1–21 (METLQSETKTRVLPSWLTAQV). The segment at 77-147 (KACEQPALAG…SPEEEEEEDV (71 aa)) is disordered. Positions 98-107 (VSPHTSSGSS) are enriched in low complexity. Residues 123–136 (SPSQRPGGSSSACS) show a composition bias toward polar residues. The XLM motif lies at 147–157 (VLKYVREIFFS).

As to quaternary structure, interacts (via KBM motif) with XRCC5/Ku80 and XRCC6/Ku70 heterodimer. Interacts (via XLF motif) with TRIM28/KAP1, ATM, MRE11, NBN and RAD50. Interacts with splicing factor SF3B1. Interacts with ERCC6L2; this interaction is DNA independent. In terms of assembly, does not interact with XRCC5/Ku80 and XRCC6/Ku70 heterodimer. Interacts (via KBM motif) with XRCC5/Ku80 and XRCC6/Ku70 heterodimer.

The protein resides in the cytoplasm. It localises to the nucleus. It is found in the chromosome. In terms of biological role, cell-cycle-specific regulator of classical non-homologous end joining (NHEJ) of DNA double-strand break (DSB) repair, which can act both as an activator or inhibitor of NHEJ, depending on the cell cycle phase. Acts as a regulator of DNA repair pathway choice by specifically inhibiting classical NHEJ during the S and G2 phases, thereby promoting error-free repair by homologous recombination during cell cycle phases when sister chromatids are present. Preferentially protects single-stranded overhangs at break sites by inhibiting classical NHEJ, thereby creating a local environment that favors homologous recombination. Acts via interaction with XRCC5/Ku80 and XRCC6/Ku70. In contrast, acts as an activator of NHEJ during G1 phase of the cell cycle: promotes classical NHEJ in G1 phase cells via multivalent interactions that increase the affinity of DNA damage response proteins for DSB-associated chromatin. Also involved in immunoglobulin V(D)J recombination. May also act as an indirect regulator of proteasome. This chain is Cell cycle regulator of non-homologous end joining, found in Homo sapiens (Human).